The sequence spans 485 residues: UDP-N-acetylmuramate--L-alanine ligase (485 aa).

An ATP-binding site is contributed by 127 to 133; that stretch reads GTHGKTT.

The protein belongs to the MurCDEF family.

Its subcellular location is the cytoplasm. It carries out the reaction UDP-N-acetyl-alpha-D-muramate + L-alanine + ATP = UDP-N-acetyl-alpha-D-muramoyl-L-alanine + ADP + phosphate + H(+). It participates in cell wall biogenesis; peptidoglycan biosynthesis. Its function is as follows. Cell wall formation. The protein is UDP-N-acetylmuramate--L-alanine ligase of Shewanella frigidimarina (strain NCIMB 400).